The following is a 387-amino-acid chain: 3-ketoacyl-CoA thiolase (387 aa).

The active-site Acyl-thioester intermediate is Cys-91. Catalysis depends on proton acceptor residues His-343 and Cys-373.

This sequence belongs to the thiolase-like superfamily. Thiolase family. As to quaternary structure, heterotetramer of two alpha chains (FadB) and two beta chains (FadA).

It localises to the cytoplasm. It catalyses the reaction an acyl-CoA + acetyl-CoA = a 3-oxoacyl-CoA + CoA. It participates in lipid metabolism; fatty acid beta-oxidation. Its function is as follows. Catalyzes the final step of fatty acid oxidation in which acetyl-CoA is released and the CoA ester of a fatty acid two carbons shorter is formed. The protein is 3-ketoacyl-CoA thiolase of Vibrio vulnificus (strain YJ016).